Reading from the N-terminus, the 470-residue chain is Putative gustatory receptor 28b (470 aa).

Over Met1–Thr76 the chain is Cytoplasmic. Residues Ile77–Thr97 form a helical membrane-spanning segment. Residues Ile98–Asp119 lie on the Extracellular side of the membrane. Residues Leu120 to Pro140 traverse the membrane as a helical segment. At Asn141–Tyr175 the chain is on the cytoplasmic side. A helical transmembrane segment spans residues Met176 to Leu196. Residues Tyr197–Thr204 are Extracellular-facing. The chain crosses the membrane as a helical span at residues Met205–Phe225. At Ser226–Gln309 the chain is on the cytoplasmic side. The chain crosses the membrane as a helical span at residues Leu310–Glu330. Residues Thr331 to Glu346 lie on the Extracellular side of the membrane. A helical membrane pass occupies residues Phe347–Glu367. Residues Gly368 to Arg423 lie on the Cytoplasmic side of the membrane. The helical transmembrane segment at Thr424–Thr444 threads the bilayer. At Ser445–Leu470 the chain is on the extracellular side. N-linked (GlcNAc...) asparagine glycans are attached at residues Asn454, Asn464, and Asn467.

The protein belongs to the insect chemoreceptor superfamily. Gustatory receptor (GR) family. Gr66a subfamily. In terms of tissue distribution, isoforms A and E have taste neuron-specific expression restricted to the labial palps, the internal taste organs in the pharynx, and the legs. In addition to expression in a large number of taste neurons, isoform A is also expressed in a few nonchemosensory neurons, including the campaniform sensilla of the wing, leg stretch receptors, and multiple dendritic neurons in the abdomen. Isoform B is the only receptor not expressed in gustatory receptor neurons in the labellum. We observe expression of this receptor in a single large cell at the base of each maxillary palp, in campaniform sensilla of the wing, and multiple dendritic neurons in the abdomen. Isoform C is expressed by many gustatory receptor neurons in the labial palps, the pharyngeal taste clusters, and taste neurons in the legs. In addition, isoform C expressed in a single cell at the base of the maxillary palps, neurons in the Johnston's organ (JO), campaniform sensilla of the wing, stretch receptors and the femoral chordotonal organ of the legs, and multiple dendritic neurons in the abdomen. Isoform D is expressed in a small number of gustatory receptor neurons in the labial palps, the ventral cibarial sense organ (VCSO), and legs. Atypical expression is observed in three neurons in the arista, campaniform sensilla of the wing, stretch and femoral chordotonal organ receptors in the legs, and multiple dendritic neurons in the abdomen. In larvae, Isoform A is expressed in neurons of the terminal external chemosensory organ and the dorsal external chemosensory organ; and isoform E is expressed in neurons of the terminal external chemosensory organ.

The protein resides in the cell membrane. Probable gustatory receptor which mediates acceptance or avoidance behavior, depending on its substrates. Atypical expression also suggests nongustatory roles in the nervous system and tissues involved in proprioception, hygroreception, and other sensory modalities. It is also possible that it has chemosensory roles in the detection of internal ligands. The polypeptide is Putative gustatory receptor 28b (Gr28b) (Drosophila melanogaster (Fruit fly)).